We begin with the raw amino-acid sequence, 211 residues long: WW domain-containing protein WWM1 (211 aa).

Residues 9–43 (PQVPSGWKAVFDDEYQTWYYVDLSTNSSQWEPPRG) form the WW domain. A disordered region spans residues 32-116 (STNSSQWEPP…QRYYPQQAPM (85 aa)). Glycyl lysine isopeptide (Lys-Gly) (interchain with G-Cter in ubiquitin) cross-links involve residues K50 and K60. A Phosphoserine modification is found at S75. Residue T78 is modified to Phosphothreonine. Over residues 80 to 116 (QVQAGAQAQQPRYYQPQQPQYPQYPQQQRYYPQQAPM) the composition is skewed to low complexity.

Interacts with metacaspase MCA1.

The protein resides in the cytoplasm. It localises to the nucleus. It is found in the mitochondrion. In terms of biological role, involved in apoptosis. May play a role in nuclear function controlling cellular proliferation coupled to mitochondrial biogenesis. Causes impaired growth when overexpressed. The chain is WW domain-containing protein WWM1 (WWM1) from Saccharomyces cerevisiae (strain ATCC 204508 / S288c) (Baker's yeast).